Reading from the N-terminus, the 2303-residue chain is Genome polyprotein (2303 aa).

A zinc finger lies at 3–14; the sequence is CKHGYPDVCPIC. Positions 30–46 are acidic; the sequence is DGEWFPTDLLCVDLDDD. The segment at 60–73 is theilo; sequence MEWTDVPLVCDTVM. The disordered stretch occupies residues 73-93; the sequence is MEPQGNASSSDKSNSQSSGNE. Gly77 is lipidated: N-myristoyl glycine; by host. Residues 80 to 90 are compositionally biased toward low complexity; the sequence is SSSDKSNSQSS. A disulfide bridge connects residues Cys501 and Cys503. The interval 1041–1047 is host EIF4E binding; sequence YYKQRLI. Residues 1283-1448 enclose the SF3 helicase domain; the sequence is IPLASLCEKF…CKTPAGMLDI (166 aa). 1312–1319 is an ATP binding site; it reads GAAGQGKS. Tyr1608 is subject to O-(5'-phospho-RNA)-tyrosine. In terms of domain architecture, Peptidase C3 spans 1636 to 1829; it reads NPVMDFELFC…AATIITRELI (194 aa). Residues His1680, Asp1714, and Cys1793 each act as for protease 3C activity in the active site. Positions 2071–2189 constitute a RdRp catalytic domain; sequence NYVYDVDYSN…GTNYQIDFNL (119 aa). Active-site for RdRp activity residues include Asp2077 and Asp2175.

This sequence belongs to the picornaviruses polyprotein family. As to quaternary structure, interacts with host EIF4E. Interacts with the leader protein. Interacts with host RAN; the complex L-RAN recruits cellular kinases responsible for the L-induced nucleocytoplasmic trafficking inhibition. The complex L-RAN can further bind to the host exportins XPO1/CRM1 and CSE1L/CAS. Interacts with the protein 2A. Interacts with host RNASEL; this interaction prevents RNASEL activation by its substrate 2'-5' oligoadenylates. Phosphorylated. Post-translationally, specific enzymatic cleavages by the viral protease in vivo yield a variety of precursors and mature proteins. The polyprotein seems to be cotranslationally cleaved at the 2A/2B junction by a ribosomal skip from one codon to the next without formation of a peptide bond. This process would release the P1-2A peptide from the translational complex. In terms of processing, during virion maturation, immature virions are rendered infectious following cleavage of VP0 into VP4 and VP2. This maturation seems to be an autocatalytic event triggered by the presence of RNA in the capsid and is followed by a conformational change of the particle. Uridylylated by the polymerase and is covalently linked to the 5'-end of genomic RNA. This uridylylated form acts as a nucleotide-peptide primer for the polymerase. Post-translationally, myristoylation is required during RNA encapsidation and formation of the mature virus particle.

Its subcellular location is the virion. It is found in the host cytoplasm. The protein resides in the host nucleus. It localises to the host nucleolus. The protein localises to the host cytoplasmic vesicle membrane. It carries out the reaction RNA(n) + a ribonucleoside 5'-triphosphate = RNA(n+1) + diphosphate. The catalysed reaction is ATP + H2O = ADP + phosphate + H(+). The enzyme catalyses Selective cleavage of Gln-|-Gly bond in the poliovirus polyprotein. In other picornavirus reactions Glu may be substituted for Gln, and Ser or Thr for Gly.. Its function is as follows. Forms a complex with host RAN and probably binds to exportins carrying activated MAPK in order to mediate the hyperphosphorylation of host Phe/Gly containing nuclear pore proteins (Nups) resulting in cessation of active nucleocytoplasmic transport. Proteins with NLS signals fail to import, cellular mRNAs fail to export, and some proteins small enough for diffusion are not retained anymore (efflux). The resulting inhibition of cellular protein synthesis serves to ensure maximal viral gene expression and to evade host immune response. The leader protein also inhibits host interferon regulatory factor 3 (IRF3) dimerization, thereby blocking the transcriptional activation of IFN genes. Binds to host RNase L thereby preventing its activation by 2'-5' oligoadenylates in order to counteract the antiviral interferon-inducible OAS/RNase L pathway. Inhibits the integrated stress response (ISR) in the infected cell. Inhibits the host EIF2AK2/PKR by rendering this kinase unable to detect double-stranded RNA. Also impairs host stress granule formation probably by acting on a step downstream of EIF2AK2/PKR activation. In terms of biological role, forms an icosahedral capsid of pseudo T=3 symmetry with capsid proteins VP2 and VP3. Together they form an icosahedral capsid composed of 60 copies of each VP1, VP2, and VP3, with a diameter of approximately 300 Angstroms. VP4 lies on the inner surface of the protein shell formed by VP1, VP2 and VP3. All the three latter proteins contain a beta-sheet structure called beta-barrel jelly roll. VP1 is situated at the 12 fivefold axes, whereas VP2 and VP3 are located at the quasi-sixfold axes. Lies on the inner surface of the capsid shell. After binding to the host receptor, the capsid undergoes conformational changes. Capsid protein VP4 is released, capsid protein VP1 N-terminus is externalized, and together, they shape a pore in the host membrane through which the viral genome is translocated into the host cell cytoplasm. After genome has been released, the channel shrinks. Functionally, VP0 precursor is a component of immature procapsids. Its function is as follows. Involved in host translation shutoff by inhibiting cap-dependent mRNA translation. Nuclear localization is required for this function. The resulting inhibition of cellular protein synthesis serves to ensure maximal viral gene expression and to evade host immune response. Inhibits the phosphorylation of the leader protein. Binds to the RNA stem-loop essential for the ribosomal frameshift event and trans-activates the production of protein 2B*. In terms of biological role, affects membrane integrity and causes an increase in membrane permeability. Associates with and induces structural rearrangements of intracellular membranes. It displays RNA-binding, nucleotide binding and NTPase activities. Functionally, serves as membrane anchor via its hydrophobic domain. Its function is as follows. Forms a primer, VPg-pU, which is utilized by the polymerase for the initiation of RNA chains. In terms of biological role, cysteine protease that generates mature viral proteins from the precursor polyprotein. In addition to its proteolytic activity, it binds to viral RNA, and thus influences viral genome replication. RNA and substrate cooperatively bind to the protease. Cleaves host PABP1, this cleavage is important for viral replication. Replicates the genomic and antigenomic RNAs by recognizing replications specific signals. Performs VPg uridylylation. This chain is Genome polyprotein, found in Mus musculus (Mouse).